The following is a 504-amino-acid chain: Sperm motility kinase 2A (504 aa).

The Protein kinase domain maps to 28–276 (YEMLGTIGHG…VAEVMMHPWV (249 aa)). ATP is bound by residues 34 to 42 (IGHGGSTKV) and Lys-57. Catalysis depends on Asp-147, which acts as the Proton acceptor. In terms of domain architecture, UBA spans 294 to 334 (KPDPAIVKAMGHIGFQAQDIEDSLRQRKFNETMASYCLLKK). 2 stretches are compositionally biased toward polar residues: residues 376–393 (PTSL…CGRS) and 443–454 (SDESTEGHTSAS). 2 disordered regions span residues 376–403 (PTSL…RSFS) and 443–469 (SDES…PRGI).

It belongs to the protein kinase superfamily. CAMK Ser/Thr protein kinase family. Smok subfamily. As to expression, testis-specific. Expressed in the testis from 22 days postpartum (22 dpp).

The enzyme catalyses L-seryl-[protein] + ATP = O-phospho-L-seryl-[protein] + ADP + H(+). The catalysed reaction is L-threonyl-[protein] + ATP = O-phospho-L-threonyl-[protein] + ADP + H(+). In terms of biological role, may play a role in sperm motility, especially in the regulation of flagellar function. In Mus musculus (Mouse), this protein is Sperm motility kinase 2A (Smok2a).